A 638-amino-acid polypeptide reads, in one-letter code: DNA mismatch repair protein MutL (638 aa).

The tract at residues 404 to 433 (FGTQTNAFGSMATPRDNSRGNYSAGESRQR) is disordered.

It belongs to the DNA mismatch repair MutL/HexB family.

Its function is as follows. This protein is involved in the repair of mismatches in DNA. It is required for dam-dependent methyl-directed DNA mismatch repair. May act as a 'molecular matchmaker', a protein that promotes the formation of a stable complex between two or more DNA-binding proteins in an ATP-dependent manner without itself being part of a final effector complex. This is DNA mismatch repair protein MutL from Shewanella baltica (strain OS195).